A 214-amino-acid polypeptide reads, in one-letter code: S-crystallin 1 (214 aa).

Residues 2–79 (PSYTLHYFNH…YLAREFGFHG (78 aa)) form the GST N-terminal domain. Positions 81-214 (NNMEMARVDF…YLQRRCRTDF (134 aa)) constitute a GST C-terminal domain.

Belongs to the GST superfamily. Lens.

S-crystallins are structural components of squids and octopi eye lens. Contains relatively little GST activity (1/1000 of that of mammalian GST enzyme). This chain is S-crystallin 1 (OCTS1), found in Octopus vulgaris (Common octopus).